The following is a 513-amino-acid chain: ATP synthase subunit alpha 2 (513 aa).

Residue 169–176 (GDRQCGKT) participates in ATP binding.

The protein belongs to the ATPase alpha/beta chains family. As to quaternary structure, F-type ATPases have 2 components, CF(1) - the catalytic core - and CF(0) - the membrane proton channel. CF(1) has five subunits: alpha(3), beta(3), gamma(1), delta(1), epsilon(1). CF(0) has three main subunits: a(1), b(2) and c(9-12). The alpha and beta chains form an alternating ring which encloses part of the gamma chain. CF(1) is attached to CF(0) by a central stalk formed by the gamma and epsilon chains, while a peripheral stalk is formed by the delta and b chains.

The protein localises to the cell inner membrane. It carries out the reaction ATP + H2O + 4 H(+)(in) = ADP + phosphate + 5 H(+)(out). Functionally, produces ATP from ADP in the presence of a proton gradient across the membrane. The alpha chain is a regulatory subunit. This is ATP synthase subunit alpha 2 from Paraburkholderia xenovorans (strain LB400).